We begin with the raw amino-acid sequence, 311 residues long: Porphobilinogen deaminase (311 aa).

C245 carries the S-(dipyrrolylmethanemethyl)cysteine modification.

This sequence belongs to the HMBS family. In terms of assembly, monomer. The cofactor is dipyrromethane.

The catalysed reaction is 4 porphobilinogen + H2O = hydroxymethylbilane + 4 NH4(+). It participates in porphyrin-containing compound metabolism; protoporphyrin-IX biosynthesis; coproporphyrinogen-III from 5-aminolevulinate: step 2/4. Functionally, tetrapolymerization of the monopyrrole PBG into the hydroxymethylbilane pre-uroporphyrinogen in several discrete steps. The sequence is that of Porphobilinogen deaminase from Acinetobacter baylyi (strain ATCC 33305 / BD413 / ADP1).